The chain runs to 244 residues: Probable 2-phosphosulfolactate phosphatase (244 aa).

It belongs to the ComB family. It depends on Mg(2+) as a cofactor.

The catalysed reaction is (2R)-O-phospho-3-sulfolactate + H2O = (2R)-3-sulfolactate + phosphate. This chain is Probable 2-phosphosulfolactate phosphatase, found in Cyanothece sp. (strain PCC 7425 / ATCC 29141).